The chain runs to 195 residues: Probable thymidylate kinase (195 aa).

7 to 14 (GIDGVGKT) lines the ATP pocket.

This sequence belongs to the thymidylate kinase family.

It carries out the reaction dTMP + ATP = dTDP + ADP. This is Probable thymidylate kinase from Methanosphaera stadtmanae (strain ATCC 43021 / DSM 3091 / JCM 11832 / MCB-3).